Reading from the N-terminus, the 323-residue chain is Pseudouridine-5'-phosphate glycosidase (323 aa).

Catalysis depends on Glu-43, which acts as the Proton donor. 2 residues coordinate substrate: Lys-104 and Val-124. Asp-156 provides a ligand contact to Mn(2+). Residue 158 to 160 (SAD) coordinates substrate. The active-site Nucleophile is Lys-177.

This sequence belongs to the pseudouridine-5'-phosphate glycosidase family. In terms of assembly, homotrimer. Mn(2+) serves as cofactor.

The enzyme catalyses D-ribose 5-phosphate + uracil = psi-UMP + H2O. Functionally, catalyzes the reversible cleavage of pseudouridine 5'-phosphate (PsiMP) to ribose 5-phosphate and uracil. Functions biologically in the cleavage direction, as part of a pseudouridine degradation pathway. This chain is Pseudouridine-5'-phosphate glycosidase, found in Streptomyces griseus subsp. griseus (strain JCM 4626 / CBS 651.72 / NBRC 13350 / KCC S-0626 / ISP 5235).